Here is a 2554-residue protein sequence, read N- to C-terminus: DnaJ homolog subfamily C GRV2 (2554 aa).

Disordered regions lie at residues 746–766 (DVVD…KRLL) and 810–833 (QRRA…GVDS). The span at 815–825 (DSSSEASNPQA) shows a compositional bias: polar residues. Coiled-coil stretches lie at residues 925 to 951 (TRQE…EDIS) and 1518 to 1546 (RTAS…LKRQ). Residues 1524 to 1606 (LNEEISNISK…AQCILYRRYG (83 aa)) form the J domain. Disordered regions lie at residues 1960–1994 (IEDR…SSEG) and 2339–2366 (SGEV…GQTP). Residues 1966–1977 (SNDTPELQSSVA) show a composition bias toward polar residues. Positions 1982–1994 (IEEHSDHQPSSEG) are enriched in basic and acidic residues. Residues 2352–2366 (VNESTDPSSLPGQTP) are compositionally biased toward polar residues.

Constitutively expressed in roots, hypocotyls, leaves (e.g. vascular tissues), stems, flowers (e.g. petals and stigmas), siliques and pollen.

It localises to the endosome membrane. Its function is as follows. Required for endosome formation, vacuolar protein sorting and determination of the embryo growth axis. Necessary for the transport of proteins into protein storage vacuoles (PSVs). Participates in vesicle trafficking from the endosome to the central vacuole. Involved in the regulation of shoot phototropism and gravitropism, probably through the positioning of specialized amyloplasts (statoliths) in endodermal cells. The chain is DnaJ homolog subfamily C GRV2 (GRV2) from Arabidopsis thaliana (Mouse-ear cress).